The chain runs to 521 residues: 56 kDa type-specific antigen (521 aa).

The N-terminal stretch at 1-22 (MRKIMLIASAMSALSLPFSANA) is a signal peptide. Residues 64-86 (LPLIKGMPFGVTLAAGMTITPGV) form a helical membrane-spanning segment. A disordered region spans residues 386–415 (LGVDQGQEGGCSKDKKQSDTTAEESKKEGK). Residues 396–415 (CSKDKKQSDTTAEESKKEGK) are compositionally biased toward basic and acidic residues. The chain crosses the membrane as a helical span at residues 469 to 484 (TGMVGSLALGVAANVA).

The protein resides in the cell membrane. In terms of biological role, may be an adherent factor for rickettsial adsorption to the host-cell surface and a determinant of virulence of individual rickettsial strain. It is the major outer membrane protein. This is 56 kDa type-specific antigen from Orientia tsutsugamushi (Rickettsia tsutsugamushi).